Reading from the N-terminus, the 797-residue chain is Inactive deaminase YBR284W (797 aa).

A helical membrane pass occupies residues 627–647 (LVYLFYLSQIPMVVAPLNSIV).

It belongs to the metallo-dependent hydrolases superfamily. Adenosine and AMP deaminases family.

It is found in the membrane. The protein is Inactive deaminase YBR284W of Saccharomyces cerevisiae (strain ATCC 204508 / S288c) (Baker's yeast).